A 684-amino-acid polypeptide reads, in one-letter code: DNA ligase (684 aa).

NAD(+)-binding positions include 34-38, 83-84, and glutamate 117; these read DYDFD and SL. The active-site N6-AMP-lysine intermediate is the lysine 119. The NAD(+) site is built by arginine 140, glutamate 188, lysine 301, and lysine 325. Zn(2+) contacts are provided by cysteine 419, cysteine 422, cysteine 437, and cysteine 443. The 83-residue stretch at 602–684 folds into the BRCT domain; it reads DAPQTFAGMT…QTMLAAESGD (83 aa).

The protein belongs to the NAD-dependent DNA ligase family. LigA subfamily. The cofactor is Mg(2+). Mn(2+) serves as cofactor.

The catalysed reaction is NAD(+) + (deoxyribonucleotide)n-3'-hydroxyl + 5'-phospho-(deoxyribonucleotide)m = (deoxyribonucleotide)n+m + AMP + beta-nicotinamide D-nucleotide.. In terms of biological role, DNA ligase that catalyzes the formation of phosphodiester linkages between 5'-phosphoryl and 3'-hydroxyl groups in double-stranded DNA using NAD as a coenzyme and as the energy source for the reaction. It is essential for DNA replication and repair of damaged DNA. The protein is DNA ligase of Chloroherpeton thalassium (strain ATCC 35110 / GB-78).